A 429-amino-acid polypeptide reads, in one-letter code: Enolase (429 aa).

Glutamine 163 serves as a coordination point for (2R)-2-phosphoglycerate. Residue glutamate 205 is the Proton donor of the active site. Residues aspartate 242, glutamate 285, and aspartate 312 each contribute to the Mg(2+) site. Positions 337, 366, 367, and 388 each coordinate (2R)-2-phosphoglycerate. The Proton acceptor role is filled by lysine 337.

Belongs to the enolase family. It depends on Mg(2+) as a cofactor.

It localises to the cytoplasm. It is found in the secreted. The protein localises to the cell surface. The catalysed reaction is (2R)-2-phosphoglycerate = phosphoenolpyruvate + H2O. It functions in the pathway carbohydrate degradation; glycolysis; pyruvate from D-glyceraldehyde 3-phosphate: step 4/5. Functionally, catalyzes the reversible conversion of 2-phosphoglycerate (2-PG) into phosphoenolpyruvate (PEP). It is essential for the degradation of carbohydrates via glycolysis. The chain is Enolase from Aromatoleum aromaticum (strain DSM 19018 / LMG 30748 / EbN1) (Azoarcus sp. (strain EbN1)).